Reading from the N-terminus, the 101-residue chain is Cysteine-rich and transmembrane domain-containing protein B (101 aa).

The disordered stretch occupies residues 1–80 (MSQQPPAVGV…PQQQQQQKHS (80 aa)). Positions 24–43 (DAYPPPGQPYPQQGYPPPQG) are enriched in pro residues. Residues 59-77 (YPEQGYPQQGYPPQQQQQQ) are compositionally biased toward low complexity. Residues 78–95 (KHSPGMLEGCIAALCCYC) traverse the membrane as a helical segment.

It belongs to the CYSTM1 family.

It localises to the membrane. The polypeptide is Cysteine-rich and transmembrane domain-containing protein B (Arabidopsis thaliana (Mouse-ear cress)).